The sequence spans 308 residues: Isoaspartyl peptidase/L-asparaginase (308 aa).

M1 is subject to N-acetylmethionine. The Nucleophile role is filled by T168. Residues 196–199 and 219–222 each bind substrate; these read RVGD and TGHG.

The protein belongs to the Ntn-hydrolase family. In terms of assembly, heterodimer of an alpha and beta chain produced by autocleavage. This heterodimer may then dimerize in turn, giving rise to a heterotetramer. In terms of processing, cleaved into an alpha and beta chain by autocatalysis; this activates the enzyme. The N-terminal residue of the beta subunit is responsible for the nucleophile hydrolase activity.

It is found in the cytoplasm. The catalysed reaction is L-asparagine + H2O = L-aspartate + NH4(+). It carries out the reaction Cleavage of a beta-linked Asp residue from the N-terminus of a polypeptide.. Its function is as follows. Has both L-asparaginase and beta-aspartyl peptidase activity. May be involved in the production of L-aspartate, which can act as an excitatory neurotransmitter in some brain regions. Is highly active with L-Asp beta-methyl ester. Besides, has catalytic activity toward beta-aspartyl dipeptides and their methyl esters, including beta-L-Asp-L-Phe, beta-L-Asp-L-Phe methyl ester (aspartame), beta-L-Asp-L-Ala, beta-L-Asp-L-Leu and beta-L-Asp-L-Lys. Does not have aspartylglucosaminidase activity and is inactive toward GlcNAc-L-Asn. Likewise, has no activity toward glutamine. This chain is Isoaspartyl peptidase/L-asparaginase (ASRGL1), found in Bos taurus (Bovine).